We begin with the raw amino-acid sequence, 241 residues long: Probable phosphatase Cthe_0111 (241 aa).

Residues H8, H10, H16, H41, E74, H102, H132, D192, and H194 each contribute to the Zn(2+) site.

This sequence belongs to the PHP family. Requires Zn(2+) as cofactor.

This Acetivibrio thermocellus (strain ATCC 27405 / DSM 1237 / JCM 9322 / NBRC 103400 / NCIMB 10682 / NRRL B-4536 / VPI 7372) (Clostridium thermocellum) protein is Probable phosphatase Cthe_0111.